Reading from the N-terminus, the 636-residue chain is Topoisomerase I damage affected protein 7 (636 aa).

Residues 1–18 (MNSNSTIGRTTLGESDTI) show a composition bias toward polar residues. Disordered stretches follow at residues 1-33 (MNSNSTIGRTTLGESDTISLSFSEPSSSLNSRS), 87-109 (TLVSSTDSSSSSEQDTYSSQYDP), 246-271 (NKDTTFPSSSRNTSTSFYSSSLSSTN), 299-326 (PTSSSVSSSSSKVPSNRPSSSSSSDDTT), and 339-362 (QSTTSSSIPPTTQTPSTSTISTSP). Asparagine 4 carries an N-linked (GlcNAc...) asparagine glycan. 2 stretches are compositionally biased toward low complexity: residues 19–33 (SLSFSEPSSSLNSRS) and 87–108 (TLVSSTDSSSSSEQDTYSSQYD). Asparagine 257 carries N-linked (GlcNAc...) asparagine glycosylation. The chain crosses the membrane as a helical span at residues 457 to 477 (IVGSVVGSVGGILICVLVVWF). A glycan (N-linked (GlcNAc...) asparagine) is linked at asparagine 492. A compositionally biased stretch (polar residues) spans 510-541 (QAKEASLQAQDSGSQQRNTETASANNPFSNEF). The tract at residues 510–551 (QAKEASLQAQDSGSQQRNTETASANNPFSNEFNFKARGNPPP) is disordered. Lysine 512 participates in a covalent cross-link: Glycyl lysine isopeptide (Lys-Gly) (interchain with G-Cter in ubiquitin). 3 N-linked (GlcNAc...) asparagine glycosylation sites follow: asparagine 557, asparagine 562, and asparagine 626. Serine 628 carries the phosphoserine modification.

It belongs to the TDA7 family.

It localises to the vacuole membrane. The polypeptide is Topoisomerase I damage affected protein 7 (TDA7) (Saccharomyces cerevisiae (strain ATCC 204508 / S288c) (Baker's yeast)).